The sequence spans 163 residues: Epithelial membrane protein 3 (163 aa).

The helical transmembrane segment at leucine 4–leucine 24 threads the bilayer. N-linked (GlcNAc...) asparagine glycans are attached at residues asparagine 46 and asparagine 56. Helical transmembrane passes span valine 66–phenylalanine 86, threonine 100–isoleucine 120, and phenylalanine 139–leucine 159.

Belongs to the PMP-22/EMP/MP20 family.

The protein localises to the membrane. In terms of biological role, probably involved in cell proliferation and cell-cell interactions. The polypeptide is Epithelial membrane protein 3 (Emp3) (Mus musculus (Mouse)).